Here is a 1188-residue protein sequence, read N- to C-terminus: Meiotically up-regulated gene 190 protein (1188 aa).

Polar residues predominate over residues 1 to 11; the sequence is MSTHSGDSTKQ. 2 disordered regions span residues 1–61 and 83–125; these read MSTH…DPIT and FTVP…EADN. A compositionally biased stretch (basic and acidic residues) spans 41-61; the sequence is EKKEEQQREQTENEKLFDPIT. A compositionally biased stretch (polar residues) spans 84–112; sequence TVPNQSIQGSSLPSEKPYLSSNQPTNVYK. Residues 173-193 traverse the membrane as a helical segment; the sequence is LVISWFFTHSIIISAVLPLAI. In terms of domain architecture, SMP-LTD spans 228–453; sequence IPESAEWMNH…SPKSMTIDLS (226 aa). Positions 298 to 318 are disordered; the sequence is ASESFSEKQASEAEHKDEPEQ. A compositionally biased stretch (basic and acidic residues) spans 302–318; that stretch reads FSEKQASEAEHKDEPEQ. C2 domains are found at residues 451-576 and 636-781; these read DLSK…ERCD and KEEE…TKWY. D485, D491, D544, D546, S549, and D552 together coordinate Ca(2+). 2 disordered regions span residues 615-639 and 1002-1066; these read TIPR…KEEE and QRAS…GTMN. Phosphoserine is present on S1005. Over residues 1022-1032 the composition is skewed to acidic residues; the sequence is DDSVDTEDEET.

Requires Ca(2+) as cofactor.

The protein resides in the cytoplasm. Its subcellular location is the endoplasmic reticulum membrane. It is found in the nucleus membrane. It localises to the cytoskeleton. The protein localises to the microtubule organizing center. The protein resides in the spindle pole body. Functionally, has a role in meiosis. This Schizosaccharomyces pombe (strain 972 / ATCC 24843) (Fission yeast) protein is Meiotically up-regulated gene 190 protein (mug190).